A 133-amino-acid chain; its full sequence is Thioredoxin-like protein CXXS1 (133 aa).

In terms of domain architecture, Thioredoxin spans 1-120 (MEIQQQKGVG…VKKMVDASAE (120 aa)).

This sequence belongs to the thioredoxin family.

This is Thioredoxin-like protein CXXS1 from Oryza sativa subsp. japonica (Rice).